A 941-amino-acid polypeptide reads, in one-letter code: Bifunctional glutamine synthetase adenylyltransferase/adenylyl-removing enzyme (941 aa).

The segment at 1–437 (MPMPTVSMSP…AAEFAELLAP (437 aa)) is adenylyl removase. The adenylyl transferase stretch occupies residues 444 to 941 (PDALADYWRA…FPLGKDETAL (498 aa)).

The protein belongs to the GlnE family. It depends on Mg(2+) as a cofactor.

It carries out the reaction [glutamine synthetase]-O(4)-(5'-adenylyl)-L-tyrosine + phosphate = [glutamine synthetase]-L-tyrosine + ADP. The enzyme catalyses [glutamine synthetase]-L-tyrosine + ATP = [glutamine synthetase]-O(4)-(5'-adenylyl)-L-tyrosine + diphosphate. Involved in the regulation of glutamine synthetase GlnA, a key enzyme in the process to assimilate ammonia. When cellular nitrogen levels are high, the C-terminal adenylyl transferase (AT) inactivates GlnA by covalent transfer of an adenylyl group from ATP to specific tyrosine residue of GlnA, thus reducing its activity. Conversely, when nitrogen levels are low, the N-terminal adenylyl removase (AR) activates GlnA by removing the adenylyl group by phosphorolysis, increasing its activity. The regulatory region of GlnE binds the signal transduction protein PII (GlnB) which indicates the nitrogen status of the cell. The polypeptide is Bifunctional glutamine synthetase adenylyltransferase/adenylyl-removing enzyme (Xanthomonas axonopodis pv. citri (strain 306)).